A 628-amino-acid polypeptide reads, in one-letter code: MAKVRILSDRVANQIAAGEVIERPAAVVKELVENALDAGATRIEVEFRHGGRSLMRVEDNGSGMSRDDALLALERHATSKISEAADLDRLGSYGFRGEALPSIASVSRFELQTREAGQNVGTEVLVSGGKLVHVRDCGRPVGTRIEVAQLFNSVPARRKFLKSDQTEAAHIVQCVRLYALACPGTAFSLIEDGRVIFRSPECPTLAERIAEIFGRQTAESLVPIESVESGMRLGGLIGRPGVGRGTRHEMIVFVNQRPVDSRTLNYALIESYYESVPKGRYPLAFVFFECDPAAVDVNVHPAKREVRFRNEPAVRSFVIRSVLQRLREIADHRSDFAQPSADNMPKPESPGAPAAHGRKDDAPAAHAEGRAATPLAAGNLIVTARFGAESTPYLEKSGAIAGARPAGVLPPAVPRIPAAPMPVNAGAAAVPAPLKPASPSWRFVGLAHGNYALFETTAGLILLDRRAAHERVWFERLQEQFRSGAVPSQRLLLPVPVELDPIAAALLLDRVQFLNAHGFEIAEFGRNFFRIEAVPAWMEPADAEPFLRDLLGAFREGHWPDRDANLAREELARLASVKAVRLPAVTGEQELRALVTHLFATRTPMTNPAGRPTYIELNHAELARRFQK.

Residues 334–367 (SDFAQPSADNMPKPESPGAPAAHGRKDDAPAAHA) are disordered. The segment covering 357–367 (GRKDDAPAAHA) has biased composition (basic and acidic residues).

The protein belongs to the DNA mismatch repair MutL/HexB family.

In terms of biological role, this protein is involved in the repair of mismatches in DNA. It is required for dam-dependent methyl-directed DNA mismatch repair. May act as a 'molecular matchmaker', a protein that promotes the formation of a stable complex between two or more DNA-binding proteins in an ATP-dependent manner without itself being part of a final effector complex. This Opitutus terrae (strain DSM 11246 / JCM 15787 / PB90-1) protein is DNA mismatch repair protein MutL.